Consider the following 80-residue polypeptide: MVAADHRALGSNKSYPASQTAEAIWPPARTLRYDRQSPWLATGFDRRMSQTVTGVGVQNCAVSKRRCSAVDHSSRTPYRR.

The first 20 residues, 1–20 (MVAADHRALGSNKSYPASQT), serve as a signal peptide directing secretion. Positions 1–21 (MVAADHRALGSNKSYPASQTA) are disordered. Positions 11 to 21 (SNKSYPASQTA) are enriched in polar residues.

This is an uncharacterized protein from Mycobacterium tuberculosis (strain CDC 1551 / Oshkosh).